We begin with the raw amino-acid sequence, 78 residues long: MSRVCQVTGKGPVTGNNISHANNKTRRRFLPNLQHHRFWVESEKRFVRLRVSAKGMRIIDKRGIDAVLVDIRKAGAKV.

The disordered stretch occupies residues 1–20; it reads MSRVCQVTGKGPVTGNNISH.

The protein belongs to the bacterial ribosomal protein bL28 family.

This chain is Large ribosomal subunit protein bL28, found in Pseudomonas putida (strain ATCC 700007 / DSM 6899 / JCM 31910 / BCRC 17059 / LMG 24140 / F1).